Here is a 182-residue protein sequence, read N- to C-terminus: MPLLNTITTPYAEAFLQVAESRNEVDEVVTQAKSILELWNSCPEFSDAMSSPVLEVNQKKAALEKLFSSQVTPSFLNLLKLLADRQRIGLLNSVLERLLEIYREQRNIALATITSASALNEDQQSELLKKVQSIAGTDNLEIDLKVDSELLGGFVVNVGSKVIDASIAGQVRRLGLALAKVS.

It belongs to the ATPase delta chain family. As to quaternary structure, F-type ATPases have 2 components, F(1) - the catalytic core - and F(0) - the membrane proton channel. F(1) has five subunits: alpha(3), beta(3), gamma(1), delta(1), epsilon(1). CF(0) has four main subunits: a(1), b(1), b'(1) and c(10-14). The alpha and beta chains form an alternating ring which encloses part of the gamma chain. F(1) is attached to F(0) by a central stalk formed by the gamma and epsilon chains, while a peripheral stalk is formed by the delta, b and b' chains.

It localises to the cellular thylakoid membrane. Functionally, f(1)F(0) ATP synthase produces ATP from ADP in the presence of a proton or sodium gradient. F-type ATPases consist of two structural domains, F(1) containing the extramembraneous catalytic core and F(0) containing the membrane proton channel, linked together by a central stalk and a peripheral stalk. During catalysis, ATP synthesis in the catalytic domain of F(1) is coupled via a rotary mechanism of the central stalk subunits to proton translocation. In terms of biological role, this protein is part of the stalk that links CF(0) to CF(1). It either transmits conformational changes from CF(0) to CF(1) or is implicated in proton conduction. The protein is ATP synthase subunit delta of Prochlorococcus marinus (strain NATL1A).